A 317-amino-acid chain; its full sequence is tRNA(Met) cytidine acetate ligase (317 aa).

ATP is bound by residues 6–19 (IAEYNPFHNGHIYQ), glycine 100, asparagine 157, and arginine 182.

This sequence belongs to the TmcAL family.

The protein localises to the cytoplasm. The catalysed reaction is cytidine(34) in elongator tRNA(Met) + acetate + ATP = N(4)-acetylcytidine(34) in elongator tRNA(Met) + AMP + diphosphate. Catalyzes the formation of N(4)-acetylcytidine (ac(4)C) at the wobble position of elongator tRNA(Met), using acetate and ATP as substrates. First activates an acetate ion to form acetyladenylate (Ac-AMP) and then transfers the acetyl group to tRNA to form ac(4)C34. The protein is tRNA(Met) cytidine acetate ligase of Mesomycoplasma hyopneumoniae (strain 232) (Mycoplasma hyopneumoniae).